A 370-amino-acid polypeptide reads, in one-letter code: Ubiquitin carboxyl-terminal hydrolase 12 (370 aa).

Residues 1-4 (MEIL) carry the Required for plasma membrane localization of USP12/WDR20 motif. The USP domain occupies 39 to 369 (FGLVNFGNTC…SGYILFYQSR (331 aa)). Cysteine 48 functions as the Nucleophile in the catalytic mechanism. Residues 146-157 (QEKQNGRLRNGD) are compositionally biased toward basic and acidic residues. The disordered stretch occupies residues 146–168 (QEKQNGRLRNGDVDNEDNNSTPD). The Zn(2+) site is built by cysteine 186, cysteine 189, cysteine 233, and cysteine 236. Histidine 317 functions as the Proton acceptor in the catalytic mechanism.

It belongs to the peptidase C19 family. USP12/USP46 subfamily. In terms of assembly, interacts with WDR48. Interacts with WDR20; this interaction promotes translocation of the USP12 complex to the plasma membrane. Component of the USP12/WDR20/WDR48 deubiquitinating complex. Component of the USP12/DMWD/WDR48 deubiquitinating complex. Interacts with PHLPP1. Interacts with RBPJ. Interacts with CBP; this interaction blocks the acetyltransferase activity of CREBBP.

It is found in the nucleus. Its subcellular location is the cytoplasm. The protein resides in the cell membrane. The catalysed reaction is Thiol-dependent hydrolysis of ester, thioester, amide, peptide and isopeptide bonds formed by the C-terminal Gly of ubiquitin (a 76-residue protein attached to proteins as an intracellular targeting signal).. With respect to regulation, activated by interaction with WDR20; WDR48 and DMWD through different allosteric mechanisms. In terms of biological role, deubiquitinating enzyme that plays various roles in the regulation of the immune response and inflammation. During TCR engagement and activation, translocates into the cytoplasm and deubiquitinates its substrates LAT and TRAT1 and prevents their lysosome-dependent degradation to stabilize the TCR signaling complex at the plasma membrane. Plays an essential role in the selective LPS-induced macrophage response through the activation of NF-kappa-B pathway. In addition, promotes that antiviral immune response through targeting DNA sensor IFI16 to inhibit its proteasome-dependent degradation. Participates in the interferon signaling pathway and antiviral response independently of its deubiquitinase activity by maintaining nuclear phosphorylated STAT1 levels via inhibition of its CREBBP-mediated acetylation and subsequent dephosphorylation. Plays an intrinsic role in promoting the differentiation, activation and proliferation of CD4(+) T-cell by activating the NF-kappa-B signaling pathway through deubiquitinating and stabilizing B-cell lymphoma/leukemia 10/BCL10. In myeloid-derived suppressor cells promotes the activation of the NF-kappa-B via deubiquitination and stabilization of RELA. Regulates the 'Lys-63'-linked polyubiquitin chains of BAX and thereby modulates the mitochondrial apoptotic process. Negative regulator of NOTCH signaling that specifically deubiquitinates non-activated NOTCH receptors to target them for lysosomal degradation; deubiquitination of NOTCH stimulates its transport form late endosomes to lysosomes. Protects neurons against HTT/huntingtin-induced polyglutamine expansion-dependent neurodegeneration through regulation of autophagic flux. This function is independent of deubiquitinase activity or of other components of the USP12-WDR20-WDR48 deubiquitinating complex. In complex with WDR48, acts as a potential tumor suppressor by positively regulating PHLPP1 stability. In Mus musculus (Mouse), this protein is Ubiquitin carboxyl-terminal hydrolase 12 (Usp12).